A 209-amino-acid polypeptide reads, in one-letter code: Large ribosomal subunit protein uL1 (209 aa).

This sequence belongs to the universal ribosomal protein uL1 family. As to quaternary structure, part of the 50S ribosomal subunit.

In terms of biological role, binds directly to 23S rRNA. The L1 stalk is quite mobile in the ribosome, and is involved in E site tRNA release. Its function is as follows. Protein L1 is also a translational repressor protein, it controls the translation of the L11 operon by binding to its mRNA. The sequence is that of Large ribosomal subunit protein uL1 (rplA) from Neorickettsia sennetsu (strain ATCC VR-367 / Miyayama) (Ehrlichia sennetsu).